A 20-amino-acid chain; its full sequence is Glutathione S-transferase 2 (20 aa).

Residues Gly1–Leu20 form the GST N-terminal domain. Glutathione is bound at residue Tyr6.

Belongs to the GST superfamily. Sigma family.

It carries out the reaction RX + glutathione = an S-substituted glutathione + a halide anion + H(+). Conjugation of reduced glutathione to a wide number of exogenous and endogenous hydrophobic electrophiles. In Ascaris suum (Pig roundworm), this protein is Glutathione S-transferase 2 (GST2).